The sequence spans 347 residues: uncharacterized protein (347 aa).

Cys39, His65, Cys95, Cys98, Cys101, Cys109, and Glu152 together coordinate Zn(2+).

The protein belongs to the zinc-containing alcohol dehydrogenase family. Requires Zn(2+) as cofactor.

This is an uncharacterized protein from Escherichia coli (strain K12).